Consider the following 196-residue polypeptide: Ribonuclease HII (196 aa).

The RNase H type-2 domain occupies 9 to 196 (NLIAGVDEVG…APVKRALNLV (188 aa)). The a divalent metal cation site is built by Asp15, Glu16, and Asp107.

The protein belongs to the RNase HII family. The cofactor is Mn(2+). It depends on Mg(2+) as a cofactor.

The protein localises to the cytoplasm. The enzyme catalyses Endonucleolytic cleavage to 5'-phosphomonoester.. Its function is as follows. Endonuclease that specifically degrades the RNA of RNA-DNA hybrids. This is Ribonuclease HII from Proteus mirabilis (strain HI4320).